Reading from the N-terminus, the 526-residue chain is Triacylglycerol lipase OBL1 (526 aa).

Residues 79-99 traverse the membrane as a helical segment; the sequence is GHLTDFLLNFYYQNHGFLGIL. Residues 338 to 342 carry the GXSXG motif; sequence GHSLG. The Nucleophile role is filled by serine 340. Catalysis depends on charge relay system residues aspartate 404 and histidine 497.

The protein belongs to the AB hydrolase superfamily. Lipase family.

It is found in the membrane. It catalyses the reaction a triacylglycerol + H2O = a diacylglycerol + a fatty acid + H(+). Functionally, acid lipase that can hydrolyze a range of triacylglycerols but is not active on phospholipids. In vitro, hydrolyzes triolein, trilinolein, triricinolein, tripalmitin, trilaurin and tricaprin. May play a role in the regulation of lipolysis in germinating seeds. This Ricinus communis (Castor bean) protein is Triacylglycerol lipase OBL1.